A 396-amino-acid polypeptide reads, in one-letter code: tRNA (guanine(9)-N1)-methyltransferase (396 aa).

Basic and acidic residues-rich tracts occupy residues 1–18 (MEDDDRPRKYPKLNHDEV) and 52–73 (DRIDNDVKQACDEEGQDAHGKD). The tract at residues 1 to 109 (MEDDDRPRKY…KVKRKEKLVA (109 aa)) is disordered. One can recognise an SAM-dependent MTase TRM10-type domain in the interval 139–357 (TQKKFQRSTL…QVIPQRKGGK (219 aa)). Residues 264 to 265 (LS), G284, 288 to 292 (DKNRH), C296, L310, and 322 to 324 (QVL) contribute to the S-adenosyl-L-methionine site. The Proton acceptor role is filled by D288. The segment at 354 to 396 (KGGKLKSADHESEDQTPRESVEAVEAEPDGEGAAAEAGEGGKE) is disordered. Over residues 359–374 (KSADHESEDQTPRESV) the composition is skewed to basic and acidic residues.

The protein belongs to the class IV-like SAM-binding methyltransferase superfamily. TRM10 family. As to quaternary structure, monomer.

The protein resides in the cytoplasm. It is found in the nucleus. The enzyme catalyses guanosine(9) in tRNA + S-adenosyl-L-methionine = N(1)-methylguanosine(9) in tRNA + S-adenosyl-L-homocysteine + H(+). Functionally, S-adenosyl-L-methionine-dependent guanine N(1)-methyltransferase that catalyzes the formation of N(1)-methylguanine at position 9 (m1G9) in cytoplasmic tRNA. In Aspergillus fumigatus (strain ATCC MYA-4609 / CBS 101355 / FGSC A1100 / Af293) (Neosartorya fumigata), this protein is tRNA (guanine(9)-N1)-methyltransferase.